The sequence spans 141 residues: Large ribosomal subunit protein uL11 (141 aa).

This sequence belongs to the universal ribosomal protein uL11 family. As to quaternary structure, part of the ribosomal stalk of the 50S ribosomal subunit. Interacts with L10 and the large rRNA to form the base of the stalk. L10 forms an elongated spine to which L12 dimers bind in a sequential fashion forming a multimeric L10(L12)X complex. Post-translationally, one or more lysine residues are methylated.

Functionally, forms part of the ribosomal stalk which helps the ribosome interact with GTP-bound translation factors. The protein is Large ribosomal subunit protein uL11 of Parasynechococcus marenigrum (strain WH8102).